Consider the following 172-residue polypeptide: Translation initiation factor IF-3 (172 aa).

It belongs to the IF-3 family. In terms of assembly, monomer.

It is found in the cytoplasm. IF-3 binds to the 30S ribosomal subunit and shifts the equilibrium between 70S ribosomes and their 50S and 30S subunits in favor of the free subunits, thus enhancing the availability of 30S subunits on which protein synthesis initiation begins. In Campylobacter concisus (strain 13826), this protein is Translation initiation factor IF-3.